The following is a 424-amino-acid chain: Glutamyl-tRNA reductase (424 aa).

Residues 49 to 52, Ser-109, 114 to 116, and Gln-120 each bind substrate; these read TCNR and EDQ. Catalysis depends on Cys-50, which acts as the Nucleophile. 189 to 194 provides a ligand contact to NADP(+); that stretch reads GFGKMS.

It belongs to the glutamyl-tRNA reductase family. In terms of assembly, homodimer.

The catalysed reaction is (S)-4-amino-5-oxopentanoate + tRNA(Glu) + NADP(+) = L-glutamyl-tRNA(Glu) + NADPH + H(+). Its pathway is porphyrin-containing compound metabolism; protoporphyrin-IX biosynthesis; 5-aminolevulinate from L-glutamyl-tRNA(Glu): step 1/2. Functionally, catalyzes the NADPH-dependent reduction of glutamyl-tRNA(Glu) to glutamate 1-semialdehyde (GSA). This is Glutamyl-tRNA reductase from Alkaliphilus metalliredigens (strain QYMF).